The sequence spans 112 residues: Putative pterin-4-alpha-carbinolamine dehydratase (112 aa).

Belongs to the pterin-4-alpha-carbinolamine dehydratase family.

It catalyses the reaction (4aS,6R)-4a-hydroxy-L-erythro-5,6,7,8-tetrahydrobiopterin = (6R)-L-erythro-6,7-dihydrobiopterin + H2O. The chain is Putative pterin-4-alpha-carbinolamine dehydratase from Shewanella denitrificans (strain OS217 / ATCC BAA-1090 / DSM 15013).